Consider the following 87-residue polypeptide: Small ribosomal subunit protein uS17 (87 aa).

It belongs to the universal ribosomal protein uS17 family. In terms of assembly, part of the 30S ribosomal subunit.

Its function is as follows. One of the primary rRNA binding proteins, it binds specifically to the 5'-end of 16S ribosomal RNA. The protein is Small ribosomal subunit protein uS17 of Lacticaseibacillus casei (strain BL23) (Lactobacillus casei).